The primary structure comprises 301 residues: Acetylglutamate kinase (301 aa).

Residues 68–69 (GG), arginine 90, and asparagine 195 contribute to the substrate site.

This sequence belongs to the acetylglutamate kinase family. ArgB subfamily.

It is found in the cytoplasm. The catalysed reaction is N-acetyl-L-glutamate + ATP = N-acetyl-L-glutamyl 5-phosphate + ADP. It participates in amino-acid biosynthesis; L-arginine biosynthesis; N(2)-acetyl-L-ornithine from L-glutamate: step 2/4. Catalyzes the ATP-dependent phosphorylation of N-acetyl-L-glutamate. This is Acetylglutamate kinase from Pseudomonas fluorescens (strain SBW25).